Reading from the N-terminus, the 213-residue chain is Orotate phosphoribosyltransferase (213 aa).

Residue K26 coordinates 5-phospho-alpha-D-ribose 1-diphosphate. Residue 34–35 (FF) participates in orotate binding. Residues 72-73 (YK), R99, K100, K103, H105, and 124-132 (DDVITAGTA) contribute to the 5-phospho-alpha-D-ribose 1-diphosphate site. Orotate contacts are provided by T128 and R156.

Belongs to the purine/pyrimidine phosphoribosyltransferase family. PyrE subfamily. In terms of assembly, homodimer. Mg(2+) serves as cofactor.

The catalysed reaction is orotidine 5'-phosphate + diphosphate = orotate + 5-phospho-alpha-D-ribose 1-diphosphate. The protein operates within pyrimidine metabolism; UMP biosynthesis via de novo pathway; UMP from orotate: step 1/2. Functionally, catalyzes the transfer of a ribosyl phosphate group from 5-phosphoribose 1-diphosphate to orotate, leading to the formation of orotidine monophosphate (OMP). The polypeptide is Orotate phosphoribosyltransferase (Escherichia coli O157:H7).